Consider the following 304-residue polypeptide: Arginine-binding protein ArgT (304 aa).

An N-terminal signal peptide occupies residues 1 to 26 (MRFPKIPKRAVAATVGIVATSFTLAS). C27 carries the N-palmitoyl cysteine lipid modification. C27 is lipidated: S-diacylglycerol cysteine.

Belongs to the bacterial solute-binding protein 3 family. The complex is probably composed of two ATP-binding proteins (ArgV), two transmembrane proteins (ArgU) and a solute-binding protein (ArgT).

It localises to the cell membrane. Part of the ABC transporter complex ArgTUV involved in L-arginine import. May also transport L-citrulline. Binds L-arginine and its molecular precursor L-citrulline, but not L-histidine, L-glutamate, L-glutamine, L-lysine or L-cysteine. The chain is Arginine-binding protein ArgT from Corynebacterium glutamicum (strain ATCC 13032 / DSM 20300 / JCM 1318 / BCRC 11384 / CCUG 27702 / LMG 3730 / NBRC 12168 / NCIMB 10025 / NRRL B-2784 / 534).